We begin with the raw amino-acid sequence, 321 residues long: Cytochrome c biogenesis protein CcsA (321 aa).

The next 8 membrane-spanning stretches (helical) occupy residues 1 to 21 (MIFITLEHILAHISFSLISVV), 36 to 56 (LSSSGGKGMIVTFVCTTGLLI), 70 to 90 (LYESFMFLSWSSSVIHIILEV), 97 to 117 (GLGAITAPSTMLTHGFATSGL), 143 to 163 (ILLSYATLLCGSLSSIAFLII), 229 to 249 (VIGLGFLLLTIGILSGAVWAN), 256 to 276 (WSWDPKETWALITWIIFAIYL), and 290 to 310 (AIIASLGSFIVWICYLGVDLL).

The protein belongs to the CcmF/CycK/Ccl1/NrfE/CcsA family. As to quaternary structure, may interact with Ccs1.

Its subcellular location is the plastid. It is found in the chloroplast thylakoid membrane. Required during biogenesis of c-type cytochromes (cytochrome c6 and cytochrome f) at the step of heme attachment. In Cycas taitungensis (Prince sago), this protein is Cytochrome c biogenesis protein CcsA.